A 337-amino-acid polypeptide reads, in one-letter code: Viral cathepsin (337 aa).

Residues 1 to 16 (MNKLLILFLLLNAALT) form the signal peptide. The propeptide at 17 to 126 (RQDNHASANN…VVDGPAQRQR (110 aa)) is activation peptide. 3 cysteine pairs are disulfide-bonded: Cys-147-Cys-188, Cys-181-Cys-221, and Cys-276-Cys-324. The active site involves Cys-150. Catalysis depends on residues His-283 and Asn-303.

This sequence belongs to the peptidase C1 family. In terms of processing, synthesized as an inactive proenzyme and activated by proteolytic removal of the inhibitory propeptide.

It catalyses the reaction Endopeptidase of broad specificity, hydrolyzing substrates of both cathepsin L and cathepsin B.. Cysteine protease that plays an essential role in host liquefaction to facilitate horizontal transmission of the virus. May participate in the degradation of foreign protein expressed by the baculovirus system. This chain is Viral cathepsin (VCATH), found in Lepidoptera (butterflies and moths).